The following is a 352-amino-acid chain: Neuronal growth regulator 1 (352 aa).

The first 35 residues, methionine 1 to glycine 35, serve as a signal peptide directing secretion. 3 consecutive Ig-like C2-type domains span residues glycine 36–threonine 132, proline 137–valine 219, and proline 223–asparagine 311. A disulfide bond links cysteine 58 and cysteine 116. 2 N-linked (GlcNAc...) asparagine glycosylation sites follow: asparagine 71 and asparagine 153. 2 cysteine pairs are disulfide-bonded: cysteine 158–cysteine 201 and cysteine 243–cysteine 295. Asparagine 273, asparagine 284, asparagine 292, and asparagine 305 each carry an N-linked (GlcNAc...) asparagine glycan. Glycine 322 carries GPI-anchor amidated glycine lipidation. Residues aspartate 323 to histidine 352 constitute a propeptide, removed in mature form.

Belongs to the immunoglobulin superfamily. IgLON family. In terms of assembly, interacts with CEPU-1 and LAMP. Post-translationally, glycosylated. Expressed in embryonic retina, telencephalon, tectum, cerebellum and diencephalon (at protein level).

It is found in the cell membrane. May be involved in cell-adhesion. May participate in the regulation of neurite outgrowth in the developing brain. This is Neuronal growth regulator 1 (NEGR1) from Gallus gallus (Chicken).